Here is an 84-residue protein sequence, read N- to C-terminus: Putative membrane protein insertion efficiency factor (84 aa).

It belongs to the UPF0161 family.

Its subcellular location is the cell inner membrane. In terms of biological role, could be involved in insertion of integral membrane proteins into the membrane. The polypeptide is Putative membrane protein insertion efficiency factor (Shewanella pealeana (strain ATCC 700345 / ANG-SQ1)).